A 991-amino-acid chain; its full sequence is UvrABC system protein A (991 aa).

Glycine 48–serine 55 lines the ATP pocket. ABC transporter domains follow at residues tryptophan 345–leucine 624 and asparagine 644–glutamate 972. Position 676–683 (glycine 676–serine 683) interacts with ATP. Residues cysteine 775–cysteine 801 form a C4-type zinc finger.

The protein belongs to the ABC transporter superfamily. UvrA family. In terms of assembly, forms a heterotetramer with UvrB during the search for lesions.

The protein resides in the cytoplasm. Functionally, the UvrABC repair system catalyzes the recognition and processing of DNA lesions. UvrA is an ATPase and a DNA-binding protein. A damage recognition complex composed of 2 UvrA and 2 UvrB subunits scans DNA for abnormalities. When the presence of a lesion has been verified by UvrB, the UvrA molecules dissociate. The chain is UvrABC system protein A from Bradyrhizobium diazoefficiens (strain JCM 10833 / BCRC 13528 / IAM 13628 / NBRC 14792 / USDA 110).